The following is a 209-amino-acid chain: UPF0502 protein PSHAa0076 (209 aa).

It belongs to the UPF0502 family.

This is UPF0502 protein PSHAa0076 from Pseudoalteromonas translucida (strain TAC 125).